The following is a 101-amino-acid chain: DNA-binding protein Fis (101 aa).

A DNA-binding region (H-T-H motif) is located at residues 77–96; it reads QTRAANMLGINRGTLRKKLK.

The protein belongs to the transcriptional regulatory Fis family. As to quaternary structure, homodimer.

In terms of biological role, activates ribosomal RNA transcription. Plays a direct role in upstream activation of rRNA promoters. This chain is DNA-binding protein Fis, found in Shewanella loihica (strain ATCC BAA-1088 / PV-4).